A 371-amino-acid chain; its full sequence is Putative ribonuclease 3 (371 aa).

One can recognise an RNase III domain in the interval 10–136; it reads AKSVKDKYIP…FLGAVCMAVD (127 aa).

It belongs to the IIV-6 142R family.

The catalysed reaction is Endonucleolytic cleavage to 5'-phosphomonoester.. Functionally, digests double-stranded RNA. The chain is Putative ribonuclease 3 from Frog virus 3 (isolate Goorha) (FV-3).